A 494-amino-acid chain; its full sequence is ATP synthase subunit beta, chloroplastic (494 aa).

Gly172–Thr179 contacts ATP.

The protein belongs to the ATPase alpha/beta chains family. F-type ATPases have 2 components, CF(1) - the catalytic core - and CF(0) - the membrane proton channel. CF(1) has five subunits: alpha(3), beta(3), gamma(1), delta(1), epsilon(1). CF(0) has four main subunits: a(1), b(1), b'(1) and c(9-12).

The protein localises to the plastid. The protein resides in the chloroplast thylakoid membrane. It catalyses the reaction ATP + H2O + 4 H(+)(in) = ADP + phosphate + 5 H(+)(out). Functionally, produces ATP from ADP in the presence of a proton gradient across the membrane. The catalytic sites are hosted primarily by the beta subunits. The chain is ATP synthase subunit beta, chloroplastic from Physcomitrium patens (Spreading-leaved earth moss).